We begin with the raw amino-acid sequence, 252 residues long: Small ribosomal subunit protein eS4 (252 aa).

In terms of domain architecture, S4 RNA-binding spans 43 to 106 (LPLLILVRDM…NKYYRVIPVP (64 aa)).

This sequence belongs to the eukaryotic ribosomal protein eS4 family.

The polypeptide is Small ribosomal subunit protein eS4 (Desulfurococcus amylolyticus (strain DSM 18924 / JCM 16383 / VKM B-2413 / 1221n) (Desulfurococcus kamchatkensis)).